A 1097-amino-acid polypeptide reads, in one-letter code: DNA-directed RNA polymerase subunit beta (1097 aa).

The interval Q1072–D1097 is disordered.

Belongs to the RNA polymerase beta chain family. In cyanobacteria the RNAP catalytic core is composed of 2 alpha, 1 beta, 1 beta', 1 gamma and 1 omega subunit. When a sigma factor is associated with the core the holoenzyme is formed, which can initiate transcription.

It catalyses the reaction RNA(n) + a ribonucleoside 5'-triphosphate = RNA(n+1) + diphosphate. Functionally, DNA-dependent RNA polymerase catalyzes the transcription of DNA into RNA using the four ribonucleoside triphosphates as substrates. This Synechococcus sp. (strain WH7803) protein is DNA-directed RNA polymerase subunit beta.